Here is a 651-residue protein sequence, read N- to C-terminus: tRNA uridine 5-carboxymethylaminomethyl modification enzyme MnmG (651 aa).

11–16 (GAGHAG) serves as a coordination point for FAD. Residue 296-310 (GPRYCPSIEDKIVRF) coordinates NAD(+).

This sequence belongs to the MnmG family. In terms of assembly, homodimer. Heterotetramer of two MnmE and two MnmG subunits. FAD is required as a cofactor.

The protein localises to the cytoplasm. Its function is as follows. NAD-binding protein involved in the addition of a carboxymethylaminomethyl (cmnm) group at the wobble position (U34) of certain tRNAs, forming tRNA-cmnm(5)s(2)U34. This chain is tRNA uridine 5-carboxymethylaminomethyl modification enzyme MnmG, found in Chloroflexus aurantiacus (strain ATCC 29366 / DSM 635 / J-10-fl).